Here is a 2102-residue protein sequence, read N- to C-terminus: Mediator of RNA polymerase II transcription subunit 13-like (2102 aa).

Disordered regions lie at residues 304–335, 432–487, 514–587, 689–758, 776–819, and 947–1034; these read SYAG…EEAQ, QRAC…QPSL, VTSS…LDPL, SSAV…TTSL, NSDE…DLHQ, and SVVE…SSVE. Over residues 439–450 the composition is skewed to pro residues; that stretch reads GHPPSAGQPPQP. Residues 455-467 show a composition bias toward basic and acidic residues; that stretch reads KMAEKLEKGDKQQ. The segment covering 693-714 has biased composition (acidic residues); it reads CDEDPEQESDPYAFEEGDEEFN. Basic and acidic residues-rich tracts occupy residues 715–737 and 794–804; these read FSDK…REDG and AEEKFGGKEPK. Polar residues predominate over residues 947-974; the sequence is SVVEQEQSCTPQTHNTFMSNSAPPSNSG. Over residues 979-990 the composition is skewed to low complexity; the sequence is PSPATPRISAPT. The span at 1015 to 1029 shows a compositional bias: polar residues; it reads SDLNSPASTPSTCRP. Short sequence motifs (LXXLL motif) lie at residues 1165 to 1169 and 1254 to 1258; these read LMLLL and LRMLL. Disordered stretches follow at residues 1451 to 1574 and 1948 to 1983; these read LTQR…DGDS and NSPT…HDES. Composition is skewed to low complexity over residues 1458-1467, 1476-1502, and 1522-1538; these read SSSQTSSSSS, TPTT…SSSS, and GAQG…QSAG. Residues 1542 to 1552 show a composition bias toward polar residues; that stretch reads DATSATSQPQV. A compositionally biased stretch (basic and acidic residues) spans 1973–1983; that stretch reads GTDRMESHDES.

This sequence belongs to the Mediator complex subunit 13 family. As to quaternary structure, component of the Mediator complex.

Its subcellular location is the nucleus. Its function is as follows. Component of the Mediator complex, a coactivator involved in regulated gene transcription of nearly all RNA polymerase II-dependent genes. Mediator functions as a bridge to convey information from gene-specific regulatory proteins to the basal RNA polymerase II transcription machinery. Mediator is recruited to promoters by direct interactions with regulatory proteins and serves as a scaffold for the assembly of a functional preinitiation complex with RNA polymerase II and the general transcription factors. The sequence is that of Mediator of RNA polymerase II transcription subunit 13-like from Danio rerio (Zebrafish).